We begin with the raw amino-acid sequence, 73 residues long: Protein RALF-like 10 (73 aa).

The signal sequence occupies residues 1–17; that stretch reads MKALVICLLVIFAAVIA. 2 cysteine pairs are disulfide-bonded: Cys35-Cys44 and Cys64-Cys70.

Belongs to the plant rapid alkalinization factor (RALF) family. In terms of tissue distribution, expressed in flowers.

Its subcellular location is the secreted. Its function is as follows. Cell signaling peptide that may regulate plant stress, growth, and development. Mediates a rapid alkalinization of extracellular space by mediating a transient increase in the cytoplasmic Ca(2+) concentration leading to a calcium-dependent signaling events through a cell surface receptor and a concomitant activation of some intracellular mitogen-activated protein kinases. The sequence is that of Protein RALF-like 10 (RALFL10) from Arabidopsis thaliana (Mouse-ear cress).